Here is a 1234-residue protein sequence, read N- to C-terminus: PAN2-PAN3 deadenylation complex catalytic subunit PAN2 (1234 aa).

Residues 12-32 are disordered; the sequence is LKNSNNNSNSNSSSNNSSNGV. Residues 14–30 show a composition bias toward low complexity; sequence NSNNNSNSNSSSNNSSN. 3 WD repeats span residues 176 to 213, 272 to 315, and 342 to 381; these read NHTGKVAMVKEAPKLLALASSTGSLELFDPTSNSSIKT, AFPA…VYHA, and QQQPHLSGLEISENGDFFMFNDGFSNLHLWSITNSGTLSK. Positions 323–346 are disordered; that stretch reads PLPPAGSSAAQQQKQQQQQQQQPH. The segment covering 333-344 has biased composition (low complexity); the sequence is QQQKQQQQQQQQ. Residues 383-537 are linker; that stretch reads FVNFPQEIER…DSIFQCQNDE (155 aa). In terms of domain architecture, USP spans 538-946; it reads KIPNCYSRLQ…KPVIVIYQEV (409 aa). Residues 751–775 are disordered; sequence PNTQQDQQQQQQQQQQQQQQQQPTN. Residues 754 to 772 are compositionally biased toward low complexity; that stretch reads QQDQQQQQQQQQQQQQQQQ. Positions 1004, 1006, 1138, and 1191 each coordinate a divalent metal cation. The Exonuclease domain occupies 1072–1199; the sequence is GEAFIDDYIV…EDARTALLLY (128 aa).

This sequence belongs to the peptidase C19 family. PAN2 subfamily. In terms of assembly, forms a heterotrimer with an asymmetric homodimer of the regulatory subunit PAN3 to form the poly(A)-nuclease (PAN) deadenylation complex. Requires a divalent metal cation as cofactor.

The protein resides in the cytoplasm. The enzyme catalyses Exonucleolytic cleavage of poly(A) to 5'-AMP.. Positively regulated by the regulatory subunit PAN3. In terms of biological role, catalytic subunit of the poly(A)-nuclease (PAN) deadenylation complex, one of two cytoplasmic mRNA deadenylases involved in mRNA turnover. PAN specifically shortens poly(A) tails of RNA and the activity is stimulated by poly(A)-binding protein PAB1. PAN deadenylation is followed by rapid degradation of the shortened mRNA tails by the CCR4-NOT complex. Deadenylated mRNAs are then degraded by two alternative mechanisms, namely exosome-mediated 3'-5' exonucleolytic degradation, or deadenylation-dependent mRNA decaping and subsequent 5'-3' exonucleolytic degradation by XRN1. May also be involved in post-transcriptional maturation of mRNA poly(A) tails. The polypeptide is PAN2-PAN3 deadenylation complex catalytic subunit PAN2 (Lodderomyces elongisporus (strain ATCC 11503 / CBS 2605 / JCM 1781 / NBRC 1676 / NRRL YB-4239) (Yeast)).